A 279-amino-acid polypeptide reads, in one-letter code: NH(3)-dependent NAD(+) synthetase (279 aa).

Glycine 40–serine 47 is a binding site for ATP. Aspartate 46 is a binding site for Mg(2+). Arginine 122 provides a ligand contact to deamido-NAD(+). Threonine 142 lines the ATP pocket. A Mg(2+)-binding site is contributed by glutamate 147. Deamido-NAD(+)-binding residues include lysine 155 and aspartate 162. ATP is bound by residues lysine 171 and serine 193. Histidine 253–lysine 254 serves as a coordination point for deamido-NAD(+).

This sequence belongs to the NAD synthetase family. As to quaternary structure, homodimer.

The enzyme catalyses deamido-NAD(+) + NH4(+) + ATP = AMP + diphosphate + NAD(+) + H(+). It functions in the pathway cofactor biosynthesis; NAD(+) biosynthesis; NAD(+) from deamido-NAD(+) (ammonia route): step 1/1. Its function is as follows. Catalyzes the ATP-dependent amidation of deamido-NAD to form NAD. Uses ammonia as a nitrogen source. The polypeptide is NH(3)-dependent NAD(+) synthetase (Sulfurisphaera tokodaii (strain DSM 16993 / JCM 10545 / NBRC 100140 / 7) (Sulfolobus tokodaii)).